The sequence spans 198 residues: Na(+)-translocating NADH-quinone reductase subunit E (198 aa).

Helical transmembrane passes span Ala-11 to Val-31, Val-35 to Val-55, Phe-77 to Val-97, Gly-110 to Val-130, Ile-140 to Leu-160, and Leu-176 to Ile-196.

The protein belongs to the NqrDE/RnfAE family. Composed of six subunits; NqrA, NqrB, NqrC, NqrD, NqrE and NqrF.

It localises to the cell inner membrane. The catalysed reaction is a ubiquinone + n Na(+)(in) + NADH + H(+) = a ubiquinol + n Na(+)(out) + NAD(+). In terms of biological role, NQR complex catalyzes the reduction of ubiquinone-1 to ubiquinol by two successive reactions, coupled with the transport of Na(+) ions from the cytoplasm to the periplasm. NqrA to NqrE are probably involved in the second step, the conversion of ubisemiquinone to ubiquinol. This Haemophilus influenzae (strain ATCC 51907 / DSM 11121 / KW20 / Rd) protein is Na(+)-translocating NADH-quinone reductase subunit E.